Reading from the N-terminus, the 184-residue chain is GTP cyclohydrolase 1 (184 aa).

Zn(2+) is bound by residues C75, H78, and C146.

Belongs to the GTP cyclohydrolase I family. In terms of assembly, toroid-shaped homodecamer, composed of two pentamers of five dimers.

It carries out the reaction GTP + H2O = 7,8-dihydroneopterin 3'-triphosphate + formate + H(+). It functions in the pathway cofactor biosynthesis; 7,8-dihydroneopterin triphosphate biosynthesis; 7,8-dihydroneopterin triphosphate from GTP: step 1/1. This is GTP cyclohydrolase 1 from Pseudoalteromonas atlantica (strain T6c / ATCC BAA-1087).